The following is a 331-amino-acid chain: Protein RecA (331 aa).

66–73 (GPESSGKT) lines the ATP pocket.

This sequence belongs to the RecA family.

It is found in the cytoplasm. Its function is as follows. Can catalyze the hydrolysis of ATP in the presence of single-stranded DNA, the ATP-dependent uptake of single-stranded DNA by duplex DNA, and the ATP-dependent hybridization of homologous single-stranded DNAs. It interacts with LexA causing its activation and leading to its autocatalytic cleavage. The sequence is that of Protein RecA from Acholeplasma laidlawii (strain PG-8A).